The chain runs to 441 residues: Cysteine proteinase (441 aa).

An intrachain disulfide couples cysteine 249 to cysteine 290. Residue cysteine 252 is part of the active site. N-linked (GlcNAc...) asparagine glycans are attached at residues asparagine 270 and asparagine 345. Catalysis depends on residues histidine 381 and asparagine 403.

Belongs to the peptidase C1 family.

The polypeptide is Cysteine proteinase (TACP) (Theileria annulata).